A 122-amino-acid polypeptide reads, in one-letter code: UPF0102 protein CKL_1410 (122 aa).

The protein belongs to the UPF0102 family.

The polypeptide is UPF0102 protein CKL_1410 (Clostridium kluyveri (strain ATCC 8527 / DSM 555 / NBRC 12016 / NCIMB 10680 / K1)).